A 185-amino-acid polypeptide reads, in one-letter code: UPF0200 protein TK1334 (185 aa).

Residue 7-14 coordinates ATP; it reads GMPGSGKS.

The protein belongs to the UPF0200 family.

This Thermococcus kodakarensis (strain ATCC BAA-918 / JCM 12380 / KOD1) (Pyrococcus kodakaraensis (strain KOD1)) protein is UPF0200 protein TK1334.